Reading from the N-terminus, the 418-residue chain is Tyrosine--tRNA ligase (418 aa).

Residue Tyr34 coordinates L-tyrosine. A 'HIGH' region motif is present at residues 39–48; sequence PTADSLHLGH. Tyr169 and Gln173 together coordinate L-tyrosine. The 'KMSKS' region signature appears at 229–233; the sequence is KFGKS. Residue Lys232 coordinates ATP. Residues 352–418 enclose the S4 RNA-binding domain; sequence LNIVDMLVTA…GKKKYAVLTY (67 aa).

This sequence belongs to the class-I aminoacyl-tRNA synthetase family. TyrS type 1 subfamily. Homodimer.

Its subcellular location is the cytoplasm. The catalysed reaction is tRNA(Tyr) + L-tyrosine + ATP = L-tyrosyl-tRNA(Tyr) + AMP + diphosphate + H(+). Its function is as follows. Catalyzes the attachment of tyrosine to tRNA(Tyr) in a two-step reaction: tyrosine is first activated by ATP to form Tyr-AMP and then transferred to the acceptor end of tRNA(Tyr). The polypeptide is Tyrosine--tRNA ligase (Streptococcus equi subsp. zooepidemicus (strain H70)).